Reading from the N-terminus, the 125-residue chain is Protein ApaG (125 aa).

Residues 1–125 (MNDTPRVCVQ…FRLAIATHIH (125 aa)) form the ApaG domain.

This chain is Protein ApaG, found in Erwinia tasmaniensis (strain DSM 17950 / CFBP 7177 / CIP 109463 / NCPPB 4357 / Et1/99).